The following is an 89-amino-acid chain: Late cornified envelope protein 3A (89 aa).

2 stretches are compositionally biased toward low complexity: residues 1-10 (MSCQQNQQQC) and 17-46 (PAKS…SERS). Disordered stretches follow at residues 1–46 (MSCQ…SERS) and 62–89 (CQSS…AGCC).

This sequence belongs to the LCE family. Interacts with CYSRT1; the interaction is direct. In terms of tissue distribution, skin-specific. Expression was readily detected in adult trunk skin, adult arm skin, fetal skin, penal skin, vulva, esophagus and tongue. Not expressed in the cervix, rectum, lung, colon, or placenta.

A structural component of the cornified envelope of the stratum corneum involved in innate cutaneous host defense. Possesses defensin-like antimicrobial activity against a broad spectrum of Gram-positive and Gram-negative bacteria, both aerobic and anaerobic species. Upon inflammation, may regulate skin barrier repair by shaping cutaneous microbiota composition and immune response to bacterial antigens. The sequence is that of Late cornified envelope protein 3A from Homo sapiens (Human).